Reading from the N-terminus, the 226-residue chain is Ribonuclease 3 (226 aa).

Positions 6–128 constitute an RNase III domain; the sequence is INRLQRKLGY…LIGGVFLDSN (123 aa). Glutamate 41 contacts Mg(2+). The active site involves aspartate 45. Positions 114 and 117 each coordinate Mg(2+). Glutamate 117 is a catalytic residue. The DRBM domain maps to 155–225; sequence DPKTRLQEYL…AEQALKKLEL (71 aa).

The protein belongs to the ribonuclease III family. As to quaternary structure, homodimer. Mg(2+) serves as cofactor.

It is found in the cytoplasm. It carries out the reaction Endonucleolytic cleavage to 5'-phosphomonoester.. Digests double-stranded RNA. Involved in the processing of primary rRNA transcript to yield the immediate precursors to the large and small rRNAs (23S and 16S). Processes some mRNAs, and tRNAs when they are encoded in the rRNA operon. Processes pre-crRNA and tracrRNA of type II CRISPR loci if present in the organism. This chain is Ribonuclease 3, found in Salmonella typhi.